The following is a 541-amino-acid chain: MAETPELEPHNAFDTILTLDFGSQYTHLITRRLRELNVYSEMLPCTQKLADLKFKPAGVILSGGPYSVYEEGAPHVDPAYFDLGVPILGICYGLQEIAYRLDSTNVIAGTSREYGLAQLKAKKVGGHVDHLFDGLEDEFNVWMSHGDKLGKLPEGFHTIATTPNSEYAGIAHETKPIYGLQLHPEVTHTQNGTKLLKNFAVNICGCKQNWTMARFVDQEIARIRKLVGPTGQVLGAVSGGVDSTVAAKLMKEAIGDRFHAVLVDTGFMRLNECEQVKQTLAEHLGINLIVADASQVFMEGLKGISDPEQKRKFIGNKFIDVFEEEAKKIEDAAAHSETAGKIGFFLQGTLYPDVIESISFKGPSATIKTHHNVGGLPKRMTEGQGLKLIEPLRELFKDEVRDLGRQLGIAHEMVMRHPFPGPGIAIRILGEITPERVEMARKADHIFISMIREAGLYDKIGQAFAALDPSRAVGVMGDKRVYENIVLLRAVETTDFMTAIAYPFEHEFLTRVSTRIVNEVSGVCRVAYDYTSKPPGTIELE.

The region spanning 15–209 is the Glutamine amidotransferase type-1 domain; that stretch reads TILTLDFGSQ…AVNICGCKQN (195 aa). Cysteine 91 serves as the catalytic Nucleophile. Residues histidine 183 and glutamate 185 contribute to the active site. In terms of domain architecture, GMPS ATP-PPase spans 210-416; sequence WTMARFVDQE…LGIAHEMVMR (207 aa). Residue 238–244 participates in ATP binding; it reads SGGVDST. 4 residues coordinate XMP: arginine 311, aspartate 478, lysine 533, and glutamate 539.

Homodimer. Requires Mg(2+) as cofactor.

The protein localises to the cytoplasm. It localises to the cytosol. The enzyme catalyses XMP + L-glutamine + ATP + H2O = GMP + L-glutamate + AMP + diphosphate + 2 H(+). It functions in the pathway purine metabolism; GMP biosynthesis; GMP from XMP (L-Gln route): step 1/1. Functionally, catalyzes the conversion of xanthine monophosphate (XMP) to GMP in the presence of glutamine and ATP through an adenyl-XMP intermediate. This is GMP synthase [glutamine-hydrolyzing] (gua1) from Aspergillus oryzae (strain ATCC 42149 / RIB 40) (Yellow koji mold).